A 91-amino-acid chain; its full sequence is MATSAAAKDDDSPATRFAVDQLRSIIERIERLEEEKKAISEDIKDVYAESKGNGFDVKALRTIIRLRKQDPNERQEEESILETYMQALGMV.

This sequence belongs to the UPF0335 family.

This Bradyrhizobium sp. (strain BTAi1 / ATCC BAA-1182) protein is UPF0335 protein BBta_6866.